The primary structure comprises 496 residues: Cytochrome P450 71B1 (496 aa).

Position 436 (C436) interacts with heme.

It belongs to the cytochrome P450 family. The cofactor is heme.

In Thlaspi arvense (Field penny-cress), this protein is Cytochrome P450 71B1 (CYP71B1).